We begin with the raw amino-acid sequence, 663 residues long: Glutamate-rich protein 6 (663 aa).

2 disordered regions span residues 1–74 (MAHL…ETFS) and 106–136 (LTSTFVPSQSATSTETPSASPPSSTSSHKSF). A compositionally biased stretch (acidic residues) spans 20–69 (ESEEELEEEEEEEEVEEEEEEVEEEEEEVEEEEEEVVEEELVGEEQELEA). Low complexity predominate over residues 112-132 (PSQSATSTETPSASPPSSTSS).

The protein belongs to the ERICH6 family.

The protein localises to the nucleus. The chain is Glutamate-rich protein 6 (ERICH6) from Homo sapiens (Human).